We begin with the raw amino-acid sequence, 372 residues long: MRGIRDPRLIPIAEKVMEGKRLSFEDGLVLYQTKDLPTLMRLANLVRERKHGHKTYFVHSIRVSQTNICYVGCTFCAFQRRFGEEGAWDWDVDEVVAWVKERYQPGLTEIHLTAGHHPKRPFAYYLDLVRALKENFPGVQVKAWTAAEIHHFSKIARLPYREVLKALKEAGLDAMPGGGAEIFAERVRRKIARAKVSAEGWLEIHRTAHELGIPTNATMLYGHIETLEERLDHMDRLRRLQDETGGFMSFIPLAFQPDGNQLARELGKKEFTTGLDDLRNLAVARLYLDNFPHIKGYWATLTPELAQVSLDWGVTDVDGTLIEERIVHMAGSPTPQGLTKRELARIILMAGRIPVERDALYREVRVWDRVEA.

A Radical SAM core domain is found at 53 to 292; the sequence is HKTYFVHSIR…VARLYLDNFP (240 aa). [4Fe-4S] cluster is bound by residues Cys-69, Cys-73, and Cys-76.

It belongs to the radical SAM superfamily. MqnE family. The cofactor is [4Fe-4S] cluster.

It catalyses the reaction 3-[(1-carboxyvinyl)-oxy]benzoate + S-adenosyl-L-methionine + H2O = 6-amino-6-deoxyfutalosine + hydrogencarbonate + L-methionine + H(+). Its pathway is quinol/quinone metabolism; menaquinone biosynthesis. In terms of biological role, radical SAM enzyme that catalyzes the addition of the adenosyl radical to the double bond of 3-[(1-carboxyvinyl)oxy]benzoate, leading to aminodeoxyfutalosine (AFL), a key intermediate in the formation of menaquinone (MK, vitamin K2) from chorismate. This is Aminodeoxyfutalosine synthase from Thermus thermophilus (strain ATCC 27634 / DSM 579 / HB8).